Reading from the N-terminus, the 141-residue chain is Drosulfakinins (141 aa).

An N-terminal signal peptide occupies residues 1 to 31 (MGLRRCTHFATLVMPLWALALFFLVVMQVPA). The propeptide occupies 32 to 73 (QTTSLQISKEDRRLQELESKMGAESEQPNANLVGPSISRFGD). A disordered region spans residues 49–69 (ESKMGAESEQPNANLVGPSIS). The residue at position 82 (Phe82) is a Phenylalanine amide. A propeptide spanning residues 86 to 111 (VPLISRPMIPIELDLLMDNDDERTKA) is cleaved from the precursor. Tyr117 carries the post-translational modification Sulfotyrosine. The residue at position 122 (Phe122) is a Phenylalanine amide. A Sulfotyrosine modification is found at Tyr134. Phe139 bears the Phenylalanine amide mark.

Belongs to the gastrin/cholecystokinin family.

It localises to the secreted. Its function is as follows. Drosulfakinin-0 (DSK 0) plays diverse biological roles including regulating gut muscle contraction in adults but not in larvae. The chain is Drosulfakinins from Drosophila erecta (Fruit fly).